The following is a 423-amino-acid chain: Glutamyl-tRNA reductase 2 (423 aa).

Substrate contacts are provided by residues 48–51 (TCYR), Ser-103, 108–110 (EPQ), and Gln-114. The active-site Nucleophile is the Cys-49. 183–188 (GAGEMA) lines the NADP(+) pocket.

This sequence belongs to the glutamyl-tRNA reductase family. In terms of assembly, homodimer.

It carries out the reaction (S)-4-amino-5-oxopentanoate + tRNA(Glu) + NADP(+) = L-glutamyl-tRNA(Glu) + NADPH + H(+). The protein operates within porphyrin-containing compound metabolism; protoporphyrin-IX biosynthesis; 5-aminolevulinate from L-glutamyl-tRNA(Glu): step 1/2. Its function is as follows. Catalyzes the NADPH-dependent reduction of glutamyl-tRNA(Glu) to glutamate 1-semialdehyde (GSA). In Anaeromyxobacter sp. (strain Fw109-5), this protein is Glutamyl-tRNA reductase 2.